Here is a 437-residue protein sequence, read N- to C-terminus: Succinate--CoA ligase [ADP-forming] subunit beta, hydrogenosomal (437 aa).

A hydrogenosome-targeting transit peptide spans 1–27 (MLANVTRSTSKAAPALASIAQTAQKRF). Positions 36–278 (MNLLHEYNVN…TTQEDPREVA (243 aa)) constitute an ATP-grasp domain. ATP contacts are provided by residues K73, 80–82 (GRG), and E141. Mg(2+) contacts are provided by N233 and D247. Substrate is bound by residues N299 and 356-358 (GIM).

This sequence belongs to the succinate/malate CoA ligase beta subunit family. Heterodimer of an alpha and a beta subunit. Requires Mg(2+) as cofactor.

It is found in the hydrogenosome. It catalyses the reaction succinate + ATP + CoA = succinyl-CoA + ADP + phosphate. The protein operates within carbohydrate metabolism; tricarboxylic acid cycle; succinate from succinyl-CoA (ligase route): step 1/1. Succinyl-CoA synthetase functions in the citric acid cycle (TCA), coupling the hydrolysis of succinyl-CoA to the synthesis of ATP and thus represents the only step of substrate-level phosphorylation in the TCA. The beta subunit provides nucleotide specificity of the enzyme and binds the substrate succinate, while the binding sites for coenzyme A and phosphate are found in the alpha subunit. In Neocallimastix frontalis (Rumen fungus), this protein is Succinate--CoA ligase [ADP-forming] subunit beta, hydrogenosomal.